Here is a 429-residue protein sequence, read N- to C-terminus: MLRCRPEPLMPRATRVAVAVSLPLSHAVIPTQLPSHPGHRPSGRPRRCPKAPCLPSPVGLSSTQPAKRVTMGWPRPGQALVAVKALLVLSVLQVPAQAVVRAMLEDISSSVDFADLPALFGVPLAPEGIRGYLMEVKPANACHPVEAPRLGNRSLGAIALIRRYDCTFDLKVLNAQRAGFEAAIVHNVHSDDLVSMTHVSEDLRGQIAIPSVFVGEAASQDLRVILGCDKSAHVLLLPDDPPCRDLDCHPVLTVSWALGRTLALVVSTLFVLNRLWLWAQACCSHRRLVKTSTCQKAQVRTFTRRNDLCAICLDEYEEGDQLKILPCSHTYHCKCIDPWFSQAPRRSCPVCKQSVAGTEDSFDSTTDSFSDEDPSLPGHRPPIWAIQARLRSRRLELLGRASPHCHCSTTSLEAEDTTVSPAPPEAPGQ.

The first 27 residues, 1 to 27, serve as a signal peptide directing secretion; it reads MLRCRPEPLMPRATRVAVAVSLPLSHA. The Lumenal portion of the chain corresponds to 28–250; it reads VIPTQLPSHP…PPCRDLDCHP (223 aa). The tract at residues 30–64 is disordered; the sequence is PTQLPSHPGHRPSGRPRRCPKAPCLPSPVGLSSTQ. The span at 37–49 shows a compositional bias: basic residues; that stretch reads PGHRPSGRPRRCP. An N-linked (GlcNAc...) asparagine glycan is attached at Asn152. The PA domain occupies 152-223; it reads NRSLGAIALI…VGEAASQDLR (72 aa). Residues 251–271 traverse the membrane as a helical segment; it reads VLTVSWALGRTLALVVSTLFV. The Cytoplasmic segment spans residues 272–429; that stretch reads LNRLWLWAQA…SPAPPEAPGQ (158 aa). The RING-type; atypical zinc finger occupies 309-352; sequence CAICLDEYEEGDQLKILPCSHTYHCKCIDPWFSQAPRRSCPVCK. Disordered stretches follow at residues 358–381 and 409–429; these read TEDSFDSTTDSFSDEDPSLPGHRP and TTSLEAEDTTVSPAPPEAPGQ. Positions 409 to 420 are enriched in polar residues; sequence TTSLEAEDTTVS.

As to quaternary structure, interacts with CANX.

The protein localises to the endoplasmic reticulum membrane. It catalyses the reaction S-ubiquitinyl-[E2 ubiquitin-conjugating enzyme]-L-cysteine + [acceptor protein]-L-lysine = [E2 ubiquitin-conjugating enzyme]-L-cysteine + N(6)-ubiquitinyl-[acceptor protein]-L-lysine.. It participates in protein modification; protein ubiquitination. Functionally, E3 ubiquitin-protein ligase that acts as a negative regulator of NOD2 signaling by mediating ubiquitination and degradation of RIPK2. Also catalyzes ubiquitination and proteasomal degradation of CANX within the endoplasmic reticulum. Could have a role in spermatogenesis. The sequence is that of E3 ubiquitin-protein ligase ZNRF4 (ZNRF4) from Macaca fascicularis (Crab-eating macaque).